A 117-amino-acid polypeptide reads, in one-letter code: Large ribosomal subunit protein uL18 (117 aa).

This sequence belongs to the universal ribosomal protein uL18 family. Part of the 50S ribosomal subunit; part of the 5S rRNA/L5/L18/L25 subcomplex. Contacts the 5S and 23S rRNAs.

Functionally, this is one of the proteins that bind and probably mediate the attachment of the 5S RNA into the large ribosomal subunit, where it forms part of the central protuberance. The chain is Large ribosomal subunit protein uL18 from Blochmanniella floridana.